The primary structure comprises 141 residues: Acetyltransferase YpeA (141 aa).

An N-acetyltransferase domain is found at 1 to 141 (MEIRVFRQED…GKRLIEDEEY (141 aa)).

It belongs to the acetyltransferase family. YpeA subfamily.

This Escherichia coli (strain K12) protein is Acetyltransferase YpeA (ypeA).